The sequence spans 161 residues: Gamma-glutamylaminecyclotransferase A (161 aa).

Residue 26-29 (YGTL) participates in substrate binding. The active-site Proton acceptor is Glu101.

The protein belongs to the gamma-glutamylcyclotransferase family.

It carries out the reaction epsilon-(gamma-L-glutamyl)-L-lysine = 5-oxo-L-proline + L-lysine. Functionally, may contribute to degradation of proteins cross-linked by transglutaminases by degrading the cross-link between a lysine and a glutamic acid residue. Catalyzes the formation of 5-oxo-L-proline from L-gamma-glutamyl-L-epsilon-lysine. The protein is Gamma-glutamylaminecyclotransferase A (ggact.1) of Danio rerio (Zebrafish).